A 313-amino-acid polypeptide reads, in one-letter code: Olfactory receptor 1D2 (313 aa).

At 1–25 (MDGGNQSEGSEFLLLGMSESPEQQR) the chain is on the extracellular side. N5 carries N-linked (GlcNAc...) asparagine glycosylation. Residues 26-49 (ILFWMFLSMYLVTVLGNVLIILAI) form a helical membrane-spanning segment. The Cytoplasmic segment spans residues 50-57 (SSDSRLHT). Residues 58–79 (PMYFFLANLSFTDLFFVTNTIP) form a helical membrane-spanning segment. Over 80–100 (KMLVNLQSQDKAISYAGCLTQ) the chain is Extracellular. An intrachain disulfide couples C97 to C189. Residues 101-120 (LYFLLSLVTLDNLILAVMAY) traverse the membrane as a helical segment. Residues 121-139 (DRYVAICCPLHYVTAMSPR) lie on the Cytoplasmic side of the membrane. The helical transmembrane segment at 140 to 158 (LCILLLSLCWVFSVLYGLI) threads the bilayer. The Extracellular portion of the chain corresponds to 159–196 (HTLLMTRVTFCGSRKIHYLFCEMYFLLRLACSNIQINH). An N-linked (GlcNAc...) asparagine glycan is attached at N195. The helical transmembrane segment at 197 to 219 (TVLXATGCFIFLIPLGFMIXSYA) threads the bilayer. Residues 220–236 (RIVRAILRIPSATGKYK) are Cytoplasmic-facing. Residues 237–259 (AFSTCASHLAVVSLFYGTLGMVY) form a helical membrane-spanning segment. At 260–271 (LQPLQTYSTKDS) the chain is on the extracellular side. The helical transmembrane segment at 272-291 (VATVMYAVVTPMMNPFIYSL) threads the bilayer. Residues 292–313 (RNKDIHGALGRLLQGKAFQKLT) are Cytoplasmic-facing.

Belongs to the G-protein coupled receptor 1 family.

The protein resides in the cell membrane. Odorant receptor. In Pongo pygmaeus (Bornean orangutan), this protein is Olfactory receptor 1D2 (OR1D2).